A 104-amino-acid chain; its full sequence is NADH-quinone oxidoreductase subunit K (104 aa).

The next 3 membrane-spanning stretches (helical) occupy residues 4-24 (VPASAYLTLAIILFCIGLFGA), 31-51 (VIVLVCIELMLNAANLNLVAF), and 67-87 (LFTMAVAAAEAAVGLAILIAL).

Belongs to the complex I subunit 4L family. As to quaternary structure, NDH-1 is composed of 14 different subunits. Subunits NuoA, H, J, K, L, M, N constitute the membrane sector of the complex.

It localises to the cell membrane. It catalyses the reaction a quinone + NADH + 5 H(+)(in) = a quinol + NAD(+) + 4 H(+)(out). Functionally, NDH-1 shuttles electrons from NADH, via FMN and iron-sulfur (Fe-S) centers, to quinones in the respiratory chain. The immediate electron acceptor for the enzyme in this species is believed to be a menaquinone. Couples the redox reaction to proton translocation (for every two electrons transferred, four hydrogen ions are translocated across the cytoplasmic membrane), and thus conserves the redox energy in a proton gradient. The chain is NADH-quinone oxidoreductase subunit K from Bacillus cereus (strain G9842).